A 360-amino-acid polypeptide reads, in one-letter code: GDP-mannose transporter (360 aa).

Topologically, residues 1-49 (MSSSETKGRNEEDVAEIKKAIATGAVKDPSNLSAIPPIFVVSGANFSMN) are cytoplasmic. The chain crosses the membrane as a helical span at residues 50–67 (FLLLCIQSSVCCACVFAV). Topologically, residues 68–84 (KKLGIISFRDFDMKDAK) are lumenal. A helical membrane pass occupies residues 85–105 (MWFPISFLLVSVIYTGSKSLQ). Over 106–110 (YLSIP) the chain is Cytoplasmic. The chain crosses the membrane as a helical span at residues 111 to 131 (VYTIFKNLTIILIAYGEVLWF). Over 132 to 134 (GGR) the chain is Lumenal. The chain crosses the membrane as a helical span at residues 135–155 (VTALTFVSFIFMVISSIIAAW). The Cytoplasmic portion of the chain corresponds to 156-164 (SDVQSALAS). A helical membrane pass occupies residues 165 to 185 (SIPGASSGVSVGAMQSLFGAL). Residue arginine 186 is a topological domain, lumenal. Residues 187-207 (GLNVGYFWMLVNCLTSAAYVL) form a helical membrane-spanning segment. Over 208 to 220 (SMRKRIKSTGFSD) the chain is Cytoplasmic. A helical membrane pass occupies residues 221–241 (WDTMFYNNLLSIPVLAVFSLI). At 242-260 (AEDWGRENLNRNFPAETRN) the chain is on the lumenal side. The helical transmembrane segment at 261–281 (FLLFAIAFSGAAAVGISYTTA) threads the bilayer. At 282-291 (WCVRVTSSTT) the chain is on the cytoplasmic side. The helical transmembrane segment at 292–312 (YSMVGALNKLPVAASGMLFFG) threads the bilayer. Residues 313–314 (DP) lie on the Lumenal side of the membrane. A helical transmembrane segment spans residues 315 to 335 (VTVGSVSAVGVGFFAGIVYAV). The Cytoplasmic segment spans residues 336–360 (AKNNQKKNERRQAADAIIPMASRKP).

This sequence belongs to the TPT transporter family. SLC35D subfamily. In terms of assembly, homooligomer.

It localises to the golgi apparatus membrane. Its subcellular location is the cytoplasmic vesicle membrane. It is found in the endoplasmic reticulum membrane. Functionally, involved in the import of GDP-mannose from the cytoplasm into the Golgi lumen. The chain is GDP-mannose transporter (VRG4) from Coprinopsis cinerea (strain Okayama-7 / 130 / ATCC MYA-4618 / FGSC 9003) (Inky cap fungus).